The chain runs to 197 residues: Large ribosomal subunit protein bL25 (197 aa).

It belongs to the bacterial ribosomal protein bL25 family. CTC subfamily. As to quaternary structure, part of the 50S ribosomal subunit; part of the 5S rRNA/L5/L18/L25 subcomplex. Contacts the 5S rRNA. Binds to the 5S rRNA independently of L5 and L18.

Its function is as follows. This is one of the proteins that binds to the 5S RNA in the ribosome where it forms part of the central protuberance. The polypeptide is Large ribosomal subunit protein bL25 (Streptomyces avermitilis (strain ATCC 31267 / DSM 46492 / JCM 5070 / NBRC 14893 / NCIMB 12804 / NRRL 8165 / MA-4680)).